A 472-amino-acid polypeptide reads, in one-letter code: 3-isopropylmalate dehydratase large subunit (472 aa).

Positions 353, 414, and 417 each coordinate [4Fe-4S] cluster.

Belongs to the aconitase/IPM isomerase family. LeuC type 1 subfamily. In terms of assembly, heterodimer of LeuC and LeuD. It depends on [4Fe-4S] cluster as a cofactor.

It carries out the reaction (2R,3S)-3-isopropylmalate = (2S)-2-isopropylmalate. Its pathway is amino-acid biosynthesis; L-leucine biosynthesis; L-leucine from 3-methyl-2-oxobutanoate: step 2/4. Its function is as follows. Catalyzes the isomerization between 2-isopropylmalate and 3-isopropylmalate, via the formation of 2-isopropylmaleate. The protein is 3-isopropylmalate dehydratase large subunit of Acinetobacter baumannii (strain AB307-0294).